Here is a 694-residue protein sequence, read N- to C-terminus: Acetyl-coenzyme A synthetase (694 aa).

A disordered region spans residues 1-23; that stretch reads MSDKRPRSPCSNNNDELNDSSVL. Residues 9–23 are compositionally biased toward polar residues; sequence PCSNNNDELNDSSVL. Residues 229-232 and Thr347 contribute to the CoA site; that span reads RGKK. ATP-binding positions include 423-425, 447-452, Asp536, and Arg551; these read GEP and DTYWQT. Residue Ser559 coordinates CoA. Arg562 serves as a coordination point for ATP. Position 628 (Arg628) interacts with CoA.

This sequence belongs to the ATP-dependent AMP-binding enzyme family.

The enzyme catalyses acetate + ATP + CoA = acetyl-CoA + AMP + diphosphate. This chain is Acetyl-coenzyme A synthetase (ACS), found in Cryptosporidium parvum.